The primary structure comprises 197 residues: Imidazoleglycerol-phosphate dehydratase (197 aa).

This sequence belongs to the imidazoleglycerol-phosphate dehydratase family.

The protein localises to the cytoplasm. The catalysed reaction is D-erythro-1-(imidazol-4-yl)glycerol 3-phosphate = 3-(imidazol-4-yl)-2-oxopropyl phosphate + H2O. The protein operates within amino-acid biosynthesis; L-histidine biosynthesis; L-histidine from 5-phospho-alpha-D-ribose 1-diphosphate: step 6/9. This is Imidazoleglycerol-phosphate dehydratase from Nitrosomonas europaea (strain ATCC 19718 / CIP 103999 / KCTC 2705 / NBRC 14298).